Reading from the N-terminus, the 225-residue chain is Transcription factor HES-7 (225 aa).

The region spanning 12–69 is the bHLH domain; sequence GPKMLKPLVEKRRRDRINRSLEELRLLLLERTRDQNLRNPKLEKAEILEFAVGYLRER. One can recognise an Orange domain in the interval 92–122; the sequence is YLSGFRECLLRLAAFAHDASPAARAQLFSAL. Residues 125-225 form a disordered region; the sequence is YLRPKPPRPK…PPPAFWRPWP (101 aa). The span at 147-158 shows a compositional bias: low complexity; sequence LDPAAPALGPAL. Residues 212–225 show a composition bias toward pro residues; that stretch reads APLPPPPAFWRPWP. A WRPW motif motif is present at residues 221 to 224; the sequence is WRPW.

In terms of assembly, transcription repression requires formation of a complex with a corepressor protein of the Groucho/TLE family.

The protein localises to the nucleus. Functionally, transcriptional repressor. Represses transcription from both N box- and E box-containing promoters. May with HES1, cooperatively regulate somite formation in the presomitic mesoderm (PSM). May function as a segmentation clock, which is essential for coordinated somite segmentation. In Homo sapiens (Human), this protein is Transcription factor HES-7 (HES7).